Consider the following 349-residue polypeptide: MDENKKRALAAALGQIEKQFGKGAVMRMGDHERQAIPAISTGSLGLDIALGIGGLPKGRIVEIYGPESSGKTTLTLSTIAEAQKQGATCAFVDAEHALDPDYAAKLGVNVDDLLVSQPDTGEQALEITDMLVRSNAVDVIIVDSVAALVPKAEIEGEMGDQHVGLQARLMSQALRKITGNIQNANCLVIFINQIRMKIGVMFGNPETTTGANALKFYASVRLDIRRTGAVKESDEVIGSETRVKVVKNKVAPPFRQAEFQILYGKGIYRNGEIIDLGVQLGLLEKSGAWYSYQGSKIGQGKANAAKFLEDNPEVAAAVEKSIRDQLLAAPASARPAALADEPADADLDY.

ATP is bound at residue 65-72 (GPESSGKT).

This sequence belongs to the RecA family.

The protein resides in the cytoplasm. Its function is as follows. Can catalyze the hydrolysis of ATP in the presence of single-stranded DNA, the ATP-dependent uptake of single-stranded DNA by duplex DNA, and the ATP-dependent hybridization of homologous single-stranded DNAs. It interacts with LexA causing its activation and leading to its autocatalytic cleavage. This Azotobacter vinelandii protein is Protein RecA.